The chain runs to 678 residues: Putative cyclic nucleotide-gated ion channel 15 (678 aa).

Topologically, residues 1 to 81 (MGYGNSRSVR…RGQTIRRWNK (81 aa)) are cytoplasmic. Residues 82-102 (IFLIACLVSLFVDPLFFFLPV) form a helical membrane-spanning segment. The Extracellular segment spans residues 103–115 (MRNEACITIGVRL). The chain crosses the membrane as a helical span at residues 116 to 136 (EVVLTLIRSLADAFYIAQILI). The Cytoplasmic segment spans residues 137–170 (RFRTAYIAPPSRVFGRGELVIDSRKIAWRYLHKS). A helical transmembrane segment spans residues 171–191 (FWIHLVAALPLPQVLIWIIIP). Residues 192–203 (NLRGSPMTNTKN) are Extracellular-facing. The chain crosses the membrane as a helical span at residues 204-224 (VLRFIIIFQYVPRMFLIFPLS). Residues 225 to 245 (RQIIKATGVVTETAWAGAAYN) are Cytoplasmic-facing. The helical transmembrane segment at 246–266 (LMLYMLASHVLGACWYLLAVE) threads the bilayer. Over 267-364 (RQEACWRHAC…GQNLATSTYA (98 aa)) the chain is Extracellular. A helical transmembrane segment spans residues 365 to 385 (GEILFAIIIATLGLVLFALLI). Over 386-678 (GNMQTYLQST…KPVEPDFSSE (293 aa)) the chain is Cytoplasmic. A nucleoside 3',5'-cyclic phosphate-binding positions include 471–595 (LFDQ…TKQL) and Glu542. Positions 587–602 (FRRLHTKQLRHKFRFY) are calmodulin-binding. An IQ domain is found at 607–638 (RTWAACFIQAAWRRHRKRKYKTELRAKEEFHY). Over residues 656–668 (RSGSDSGMMSSIQ) the composition is skewed to polar residues. The tract at residues 656–678 (RSGSDSGMMSSIQKPVEPDFSSE) is disordered.

It belongs to the cyclic nucleotide-gated cation channel (TC 1.A.1.5) family. In terms of assembly, homotetramer or heterotetramer.

It is found in the cell membrane. Its function is as follows. Putative cyclic nucleotide-gated ion channel. This chain is Putative cyclic nucleotide-gated ion channel 15 (CNGC15), found in Arabidopsis thaliana (Mouse-ear cress).